A 375-amino-acid chain; its full sequence is Peptide chain release factor 1 (375 aa).

N5-methylglutamine is present on Q237. Residues 289 to 299 show a composition bias toward basic and acidic residues; the sequence is AAREAQERQER. A disordered region spans residues 289–326; the sequence is AAREAQERQERASQVGSGDRSEKIRTYNYPQNRVTDHR.

It belongs to the prokaryotic/mitochondrial release factor family. Methylated by PrmC. Methylation increases the termination efficiency of RF1.

It is found in the cytoplasm. Functionally, peptide chain release factor 1 directs the termination of translation in response to the peptide chain termination codons UAG and UAA. This is Peptide chain release factor 1 (prfA) from Deinococcus radiodurans (strain ATCC 13939 / DSM 20539 / JCM 16871 / CCUG 27074 / LMG 4051 / NBRC 15346 / NCIMB 9279 / VKM B-1422 / R1).